A 448-amino-acid chain; its full sequence is SVP1-like protein 2 (448 aa).

Asparagine 61, asparagine 155, asparagine 256, asparagine 280, asparagine 315, and asparagine 421 each carry an N-linked (GlcNAc...) asparagine glycan. 2 WD repeats span residues alanine 222–glutamate 262 and valine 267–threonine 306. The disordered stretch occupies residues threonine 416–proline 435. Residues leucine 424 to proline 435 show a composition bias toward basic and acidic residues.

This sequence belongs to the WD repeat PROPPIN family. In terms of processing, N-glycosylated.

The protein resides in the endosome membrane. It is found in the prevacuolar compartment membrane. Involved in piecemeal microautophagy of the nucleus (micronucleophagy). The sequence is that of SVP1-like protein 2 (HSV2) from Saccharomyces cerevisiae (strain ATCC 204508 / S288c) (Baker's yeast).